The following is a 377-amino-acid chain: Flagellin D (377 aa).

The stretch at 104-128 forms a coiled coil; it reads NSKADRVAIQEEVTALNDELNRIAE.

This sequence belongs to the bacterial flagellin family. Heteromer of multiple flagellin subunits including FlaA, FlaB, FlaC, FlaD and possibly FlaE.

The protein resides in the secreted. Its subcellular location is the bacterial flagellum. Functionally, flagellin is the subunit protein which polymerizes to form the filaments of bacterial flagella. FlaD is not essential for flagellar synthesis and motility. May have a role in virulence unrelated to motility. The chain is Flagellin D (flaD) from Vibrio anguillarum (Listonella anguillarum).